The chain runs to 456 residues: UDP-N-acetylmuramoylalanine--D-glutamate ligase (456 aa).

Position 113-119 (113-119) interacts with ATP; sequence GTNGKTT.

This sequence belongs to the MurCDEF family.

It localises to the cytoplasm. The enzyme catalyses UDP-N-acetyl-alpha-D-muramoyl-L-alanine + D-glutamate + ATP = UDP-N-acetyl-alpha-D-muramoyl-L-alanyl-D-glutamate + ADP + phosphate + H(+). Its pathway is cell wall biogenesis; peptidoglycan biosynthesis. Functionally, cell wall formation. Catalyzes the addition of glutamate to the nucleotide precursor UDP-N-acetylmuramoyl-L-alanine (UMA). In Crocosphaera subtropica (strain ATCC 51142 / BH68) (Cyanothece sp. (strain ATCC 51142)), this protein is UDP-N-acetylmuramoylalanine--D-glutamate ligase.